We begin with the raw amino-acid sequence, 426 residues long: Ubiquitin carboxyl-terminal hydrolase 46 (426 aa).

The N-myristoyl glycine moiety is linked to residue G2. The USP domain occupies 27–406 (YGLVNFGNTC…SAYILFYQAR (380 aa)). The active-site Nucleophile is the C36. Residues 162–181 (TAGLPRSDEKGTSERNGGIT) form a disordered region. The active-site Proton acceptor is H342.

It belongs to the peptidase C19 family. In terms of assembly, interacts with wdr-20 and wdr-48; the catalytic activity of usp-46 is increased in the presence of both wdr-20 and wdr-48. Interacts with glr-1; the interaction results in deubiquitination of glr-1. As to expression, expressed in a number of tissues including the nervous system, pharynx, body wall muscle, vulva muscle and intestine and is detected in many head and ventral cord neurons.

Its subcellular location is the perikaryon. The protein localises to the cytoplasm. It catalyses the reaction Thiol-dependent hydrolysis of ester, thioester, amide, peptide and isopeptide bonds formed by the C-terminal Gly of ubiquitin (a 76-residue protein attached to proteins as an intracellular targeting signal).. Functionally, regulates the abundance of the glr-1 glutamate receptor in the ventral nerve cord by promoting its deubiquitination and preventing its degradation in the lysosome. Contributes to the regulation of embryonic polarity. The sequence is that of Ubiquitin carboxyl-terminal hydrolase 46 (usp-46) from Caenorhabditis elegans.